Consider the following 168-residue polypeptide: Troponin I, cardiac muscle (168 aa).

Basic and acidic residues predominate over residues V128–V147. Residues V128–G168 are disordered.

The protein belongs to the troponin I family. Binds to actin and tropomyosin.

Troponin I is the inhibitory subunit of troponin, the thin filament regulatory complex which confers calcium-sensitivity to striated muscle actomyosin ATPase activity. This is Troponin I, cardiac muscle (TNNI3) from Gallus gallus (Chicken).